Here is a 401-residue protein sequence, read N- to C-terminus: 26S proteasome regulatory subunit 6A (401 aa).

Position 189–196 (189–196 (GPPGTGKT)) interacts with ATP.

It belongs to the AAA ATPase family. As to quaternary structure, the 26S proteasome consists of a 20S proteasome core and two 19S regulatory subunits. The 20S proteasome core is composed of 28 subunits that are arranged in four stacked rings, resulting in a barrel-shaped structure. The two end rings are each formed by seven alpha subunits, and the two central rings are each formed by seven beta subunits. The catalytic chamber with the active sites is on the inside of the barrel.

Its subcellular location is the cytoplasm. It localises to the nucleus. Its function is as follows. Acts as a regulatory subunit of the 26S proteasome which degrades poly-ubiquitinated proteins in the cytoplasm and in the nucleus. It is essential for the regulated turnover of proteins and for the removal of misfolded proteins. The proteasome is a multicatalytic proteinase complex that is characterized by its ability to cleave peptides with Arg, Phe, Tyr, Leu, and Glu adjacent to the leaving group at neutral or slightly basic pH. The chain is 26S proteasome regulatory subunit 6A (RPT5) from Encephalitozoon cuniculi (strain GB-M1) (Microsporidian parasite).